The chain runs to 489 residues: Betaine aldehyde dehydrogenase (489 aa).

T26 and D93 together coordinate K(+). 150-152 is a binding site for NAD(+); that stretch reads GAW. K162 (charge relay system) is an active-site residue. 176 to 179 is a binding site for NAD(+); the sequence is KPSE. V180 is a binding site for K(+). 229 to 232 lines the NAD(+) pocket; the sequence is GVET. L245 is a K(+) binding site. E251 (proton acceptor) is an active-site residue. G253, C285, and E386 together coordinate NAD(+). C285 acts as the Nucleophile in catalysis. C285 carries the cysteine sulfenic acid (-SOH) modification. K(+) contacts are provided by K456 and G459. E463 functions as the Charge relay system in the catalytic mechanism.

This sequence belongs to the aldehyde dehydrogenase family. Dimer of dimers. K(+) is required as a cofactor.

The catalysed reaction is betaine aldehyde + NAD(+) + H2O = glycine betaine + NADH + 2 H(+). It functions in the pathway amine and polyamine biosynthesis; betaine biosynthesis via choline pathway; betaine from betaine aldehyde: step 1/1. Functionally, involved in the biosynthesis of the osmoprotectant glycine betaine. Catalyzes the irreversible oxidation of betaine aldehyde to the corresponding acid. This is Betaine aldehyde dehydrogenase from Burkholderia pseudomallei (strain 1106a).